A 422-amino-acid polypeptide reads, in one-letter code: Transcription termination factor Rho (422 aa).

The region spanning 52-127 is the Rho RNA-BD domain; sequence EVGGDGVLEV…TRVTKINFDD (76 aa). ATP-binding positions include 173-178, 185-190, and Arg-216; these read GKGQRG and RTGKTV.

It belongs to the Rho family. In terms of assembly, homohexamer. The homohexamer assembles into an open ring structure.

Facilitates transcription termination by a mechanism that involves Rho binding to the nascent RNA, activation of Rho's RNA-dependent ATPase activity, and release of the mRNA from the DNA template. The chain is Transcription termination factor Rho from Cereibacter sphaeroides (strain ATCC 17023 / DSM 158 / JCM 6121 / CCUG 31486 / LMG 2827 / NBRC 12203 / NCIMB 8253 / ATH 2.4.1.) (Rhodobacter sphaeroides).